The primary structure comprises 213 residues: Orotate phosphoribosyltransferase (213 aa).

Lys26 is a 5-phospho-alpha-D-ribose 1-diphosphate binding site. 34–35 (FF) is a binding site for orotate. Residues 72 to 73 (YK), Arg99, Lys100, Lys103, His105, and 124 to 132 (DDVITAGTA) each bind 5-phospho-alpha-D-ribose 1-diphosphate. Positions 128 and 156 each coordinate orotate.

The protein belongs to the purine/pyrimidine phosphoribosyltransferase family. PyrE subfamily. As to quaternary structure, homodimer. It depends on Mg(2+) as a cofactor.

It carries out the reaction orotidine 5'-phosphate + diphosphate = orotate + 5-phospho-alpha-D-ribose 1-diphosphate. The protein operates within pyrimidine metabolism; UMP biosynthesis via de novo pathway; UMP from orotate: step 1/2. In terms of biological role, catalyzes the transfer of a ribosyl phosphate group from 5-phosphoribose 1-diphosphate to orotate, leading to the formation of orotidine monophosphate (OMP). The polypeptide is Orotate phosphoribosyltransferase (Edwardsiella ictaluri (strain 93-146)).